The chain runs to 188 residues: Xanthine phosphoribosyltransferase (188 aa).

Leu-20 and Asn-27 together coordinate xanthine. 127-131 (AYGNA) provides a ligand contact to 5-phospho-alpha-D-ribose 1-diphosphate. Lys-155 is a xanthine binding site.

This sequence belongs to the purine/pyrimidine phosphoribosyltransferase family. Xpt subfamily. Homodimer.

It is found in the cytoplasm. The enzyme catalyses XMP + diphosphate = xanthine + 5-phospho-alpha-D-ribose 1-diphosphate. The protein operates within purine metabolism; XMP biosynthesis via salvage pathway; XMP from xanthine: step 1/1. Functionally, converts the preformed base xanthine, a product of nucleic acid breakdown, to xanthosine 5'-monophosphate (XMP), so it can be reused for RNA or DNA synthesis. The protein is Xanthine phosphoribosyltransferase of Parabacteroides distasonis (strain ATCC 8503 / DSM 20701 / CIP 104284 / JCM 5825 / NCTC 11152).